The chain runs to 518 residues: 2-isopropylmalate synthase (518 aa).

Residues 24-275 (VYIFDTTLRD…KTNIKTQKLY (252 aa)) enclose the Pyruvate carboxyltransferase domain. 4 residues coordinate a divalent metal cation: Asp33, His213, His215, and Asn249.

The protein belongs to the alpha-IPM synthase/homocitrate synthase family. In terms of assembly, homodimer. Requires a divalent metal cation as cofactor.

It catalyses the reaction 3-methyl-2-oxobutanoate + acetyl-CoA + H2O = (2S)-2-isopropylmalate + CoA + H(+). The protein operates within amino-acid biosynthesis; L-leucine biosynthesis; L-leucine from 3-methyl-2-oxobutanoate: step 1/4. Functionally, catalyzes the condensation of the acetyl group of acetyl-CoA with 3-methyl-2-oxobutanoate (2-oxoisovalerate) to form 3-carboxy-3-hydroxy-4-methylpentanoate (2-isopropylmalate). The chain is 2-isopropylmalate synthase (leuA) from Methanocaldococcus jannaschii (strain ATCC 43067 / DSM 2661 / JAL-1 / JCM 10045 / NBRC 100440) (Methanococcus jannaschii).